Consider the following 362-residue polypeptide: Phosphoserine aminotransferase (362 aa).

R43 is an L-glutamate binding site. Residues 77–78, W103, T153, D173, and Q196 contribute to the pyridoxal 5'-phosphate site; that span reads AT. K197 carries the post-translational modification N6-(pyridoxal phosphate)lysine. 238–239 contributes to the pyridoxal 5'-phosphate binding site; it reads NT.

It belongs to the class-V pyridoxal-phosphate-dependent aminotransferase family. SerC subfamily. In terms of assembly, homodimer. Pyridoxal 5'-phosphate is required as a cofactor.

The protein resides in the cytoplasm. The enzyme catalyses O-phospho-L-serine + 2-oxoglutarate = 3-phosphooxypyruvate + L-glutamate. The catalysed reaction is 4-(phosphooxy)-L-threonine + 2-oxoglutarate = (R)-3-hydroxy-2-oxo-4-phosphooxybutanoate + L-glutamate. The protein operates within amino-acid biosynthesis; L-serine biosynthesis; L-serine from 3-phospho-D-glycerate: step 2/3. It participates in cofactor biosynthesis; pyridoxine 5'-phosphate biosynthesis; pyridoxine 5'-phosphate from D-erythrose 4-phosphate: step 3/5. Its function is as follows. Catalyzes the reversible conversion of 3-phosphohydroxypyruvate to phosphoserine and of 3-hydroxy-2-oxo-4-phosphonooxybutanoate to phosphohydroxythreonine. This Acidithiobacillus ferrooxidans (strain ATCC 23270 / DSM 14882 / CIP 104768 / NCIMB 8455) (Ferrobacillus ferrooxidans (strain ATCC 23270)) protein is Phosphoserine aminotransferase.